A 200-amino-acid chain; its full sequence is Dephospho-CoA kinase (200 aa).

Residues 4-200 (VLALTGGIAT…QLLIKIKEEG (197 aa)) form the DPCK domain. 12–17 (ATGKST) contacts ATP.

The protein belongs to the CoaE family.

Its subcellular location is the cytoplasm. It catalyses the reaction 3'-dephospho-CoA + ATP = ADP + CoA + H(+). It participates in cofactor biosynthesis; coenzyme A biosynthesis; CoA from (R)-pantothenate: step 5/5. Its function is as follows. Catalyzes the phosphorylation of the 3'-hydroxyl group of dephosphocoenzyme A to form coenzyme A. The protein is Dephospho-CoA kinase of Lactobacillus acidophilus (strain ATCC 700396 / NCK56 / N2 / NCFM).